Here is a 624-residue protein sequence, read N- to C-terminus: Phosphomethylpyrimidine synthase (624 aa).

Substrate contacts are provided by residues N231, M260, Y289, H325, 345–347 (SRG), 386–389 (DGLR), and E425. H429 serves as a coordination point for Zn(2+). Residue Y452 participates in substrate binding. A Zn(2+)-binding site is contributed by H493. 3 residues coordinate [4Fe-4S] cluster: C573, C576, and C581.

Belongs to the ThiC family. Homodimer. Requires [4Fe-4S] cluster as cofactor.

The enzyme catalyses 5-amino-1-(5-phospho-beta-D-ribosyl)imidazole + S-adenosyl-L-methionine = 4-amino-2-methyl-5-(phosphooxymethyl)pyrimidine + CO + 5'-deoxyadenosine + formate + L-methionine + 3 H(+). The protein operates within cofactor biosynthesis; thiamine diphosphate biosynthesis. Catalyzes the synthesis of the hydroxymethylpyrimidine phosphate (HMP-P) moiety of thiamine from aminoimidazole ribotide (AIR) in a radical S-adenosyl-L-methionine (SAM)-dependent reaction. This chain is Phosphomethylpyrimidine synthase, found in Myxococcus xanthus (strain DK1622).